Reading from the N-terminus, the 780-residue chain is Ral guanine nucleotide dissociation stimulator-like 2 (780 aa).

A disordered region spans residues 1-92 (MLPRPLRLLW…PTPPPRSSRR (92 aa)). The residue at position 13 (S13) is a Phosphoserine. Over residues 31–42 (GGGPGGRGVGGG) the composition is skewed to gly residues. A compositionally biased stretch (acidic residues) spans 43–65 (QEEEEEEEEDEAPVSVWDEEEDG). The 125-residue stretch at 89–213 (SSRRLRAGTL…GSADLIRNLR (125 aa)) folds into the N-terminal Ras-GEF domain. The Ras-GEF domain maps to 244–516 (LADHLAEQLT…HRVSCEVEPP (273 aa)). Residues 596-613 (HSLADPSHLSPPASSPRP) are compositionally biased toward low complexity. Disordered stretches follow at residues 596–651 (HSLA…GASD) and 741–769 (TATLGLTSSPSASGTPPSEGGGGSFPRIK). The 88-residue stretch at 651–738 (DCRIIRVQME…HDFLLRQRRR (88 aa)) folds into the Ras-associating domain. Residues 741-758 (TATLGLTSSPSASGTPPS) show a composition bias toward low complexity.

As to quaternary structure, interacts with SAMD9.

Probable guanine nucleotide exchange factor. Putative effector of Ras and/or Rap. Associates with the GTP-bound form of Rap 1A and H-Ras in vitro. The polypeptide is Ral guanine nucleotide dissociation stimulator-like 2 (RGL2) (Canis lupus familiaris (Dog)).